The primary structure comprises 461 residues: Propionyl-CoA carboxylase regulator (461 aa).

Residues 11 to 65 enclose the HTH cro/C1-type domain; the sequence is LRELRVKLGLTQKVFAERLGASLPYLNQMENNHRPVSATVVLALAQEFGVDVTKL. Residues 22–41 constitute a DNA-binding region (H-T-H motif); sequence QKVFAERLGASLPYLNQMEN.

This sequence belongs to the short-chain fatty acyl-CoA assimilation regulator (ScfR) family.

Transcriptional regulator that controls propionyl-CoA assimilation through the methylmalonyl-CoA pathway via regulation of pccB expression. In Cereibacter sphaeroides (strain ATCC 17023 / DSM 158 / JCM 6121 / CCUG 31486 / LMG 2827 / NBRC 12203 / NCIMB 8253 / ATH 2.4.1.) (Rhodobacter sphaeroides), this protein is Propionyl-CoA carboxylase regulator.